A 474-amino-acid polypeptide reads, in one-letter code: Glutamate--tRNA ligase 2 (474 aa).

Positions 16 to 26 (PSPTGFLHIGG) match the 'HIGH' region motif. The short motif at 245 to 249 (KLSKR) is the 'KMSKS' region element. K248 is an ATP binding site.

This sequence belongs to the class-I aminoacyl-tRNA synthetase family. Glutamate--tRNA ligase type 1 subfamily. Monomer.

The protein localises to the cytoplasm. The catalysed reaction is tRNA(Glu) + L-glutamate + ATP = L-glutamyl-tRNA(Glu) + AMP + diphosphate. Catalyzes the attachment of glutamate to tRNA(Glu) in a two-step reaction: glutamate is first activated by ATP to form Glu-AMP and then transferred to the acceptor end of tRNA(Glu). This is Glutamate--tRNA ligase 2 from Rhizorhabdus wittichii (strain DSM 6014 / CCUG 31198 / JCM 15750 / NBRC 105917 / EY 4224 / RW1) (Sphingomonas wittichii).